A 428-amino-acid chain; its full sequence is MRGLDRWIAEAIRSESLDHNGQIICGGLFLEESLPSSSVSFLSSKDCSVNSCRFSQKSSFLKFRRRNGTREPLFLSVSLSINESNGEEEEGEGYNGQNGFKSEKGSVLIGGGQESKEKRRVKENGAGALNTTKHLWAGAFAAMVSRTCIAPLERMKLEYIVRGEQGNLLELIQRIATNEGIRGFWKGNLVNILRTAPFKSINFYAYDTYRGQLLKLSGNEETTNFERFVAGAAAGVTASLLCLPLDTIRTVMVAPGGEALGGVVGAFRHMIQTEGFFSLYKGLVPSLVSMAPSGAVFYGVYDILKSAYLHTPEGKKRLEHMKQEGEELNAFDQLELGPMRTLLYGAIAGACSEAATYPFEVVRRRLQMQSHAKRLSAVATCVKIIEQGGVPALYAGLIPSLLQVLPSAAISYFVYEFMKVVLKVESSA.

3 Solcar repeats span residues 129–212, 222–307, and 336–421; these read LNTT…YRGQ, TTNF…LKSA, and LGPM…MKVV. Transmembrane regions (helical) follow at residues 132-152, 187-207, 228-248, 283-303, 342-362, and 390-410; these read TKHL…IAPL, GNLV…YAYD, FVAG…LDTI, LVPS…VYDI, LLYG…FEVV, and VPAL…SAAI.

Belongs to the mitochondrial carrier (TC 2.A.29) family.

Its subcellular location is the mitochondrion inner membrane. Probable mitochondrial adenylate carrier that catalyzes the transport of ATP, ADP and AMP. This chain is Probable mitochondrial adenine nucleotide transporter BTL3, found in Arabidopsis thaliana (Mouse-ear cress).